Here is a 528-residue protein sequence, read N- to C-terminus: ATP synthase subunit alpha 1 (528 aa).

Residue glycine 169–threonine 176 participates in ATP binding.

It belongs to the ATPase alpha/beta chains family. As to quaternary structure, F-type ATPases have 2 components, CF(1) - the catalytic core - and CF(0) - the membrane proton channel. CF(1) has five subunits: alpha(3), beta(3), gamma(1), delta(1), epsilon(1). CF(0) has three main subunits: a(1), b(2) and c(9-12). The alpha and beta chains form an alternating ring which encloses part of the gamma chain. CF(1) is attached to CF(0) by a central stalk formed by the gamma and epsilon chains, while a peripheral stalk is formed by the delta and b chains.

It localises to the cell membrane. The enzyme catalyses ATP + H2O + 4 H(+)(in) = ADP + phosphate + 5 H(+)(out). Its function is as follows. Produces ATP from ADP in the presence of a proton gradient across the membrane. The alpha chain is a regulatory subunit. This is ATP synthase subunit alpha 1 from Mycoplasmopsis pulmonis (strain UAB CTIP) (Mycoplasma pulmonis).